The following is a 276-amino-acid chain: Probable endonuclease 4 (276 aa).

Histidine 67, histidine 107, glutamate 142, aspartate 176, histidine 179, histidine 211, aspartate 224, histidine 226, and glutamate 256 together coordinate Zn(2+).

The protein belongs to the AP endonuclease 2 family. Zn(2+) is required as a cofactor.

The catalysed reaction is Endonucleolytic cleavage to 5'-phosphooligonucleotide end-products.. Its function is as follows. Endonuclease IV plays a role in DNA repair. It cleaves phosphodiester bonds at apurinic or apyrimidinic (AP) sites, generating a 3'-hydroxyl group and a 5'-terminal sugar phosphate. The chain is Probable endonuclease 4 from Methanosphaera stadtmanae (strain ATCC 43021 / DSM 3091 / JCM 11832 / MCB-3).